Reading from the N-terminus, the 477-residue chain is Glutamate--tRNA ligase (477 aa).

A 'HIGH' region motif is present at residues 8 to 18; the sequence is PSPTGTLHIGT. A 'KMSKS' region motif is present at residues 247–251; it reads KLSKR. Lysine 250 lines the ATP pocket.

This sequence belongs to the class-I aminoacyl-tRNA synthetase family. Glutamate--tRNA ligase type 1 subfamily. In terms of assembly, monomer.

It is found in the cytoplasm. It catalyses the reaction tRNA(Glu) + L-glutamate + ATP = L-glutamyl-tRNA(Glu) + AMP + diphosphate. Functionally, catalyzes the attachment of glutamate to tRNA(Glu) in a two-step reaction: glutamate is first activated by ATP to form Glu-AMP and then transferred to the acceptor end of tRNA(Glu). The chain is Glutamate--tRNA ligase from Synechococcus sp. (strain CC9902).